A 475-amino-acid polypeptide reads, in one-letter code: PRAME family member 20 (475 aa).

One copy of the LRR 1; degenerate repeat lies at 97–124 (RWKLQVLDLQDVSENFWMVWSEAMARRC). An LRR 2; degenerate repeat occupies 179 to 203 (HLCCKKLKMLGMLFHNIRNILKTVN). Residues 204 to 230 (LDCIQEVEVNCNWTLPVLAEFTPYLGQ) form an LRR 3; degenerate repeat. Residues 231–265 (MRNLRKLVLSDIDSRYISPEQKKEFVTQFTTQFLK) form an LRR 4; degenerate repeat. LRR repeat units follow at residues 266–291 (LRCL…LSCL), 292–323 (KTSL…GQLK), 324–342 (TLDL…PLQV), 348–375 (AATL…ALSR), and 376–400 (CFEL…LLCH).

It belongs to the PRAME family.

This Homo sapiens (Human) protein is PRAME family member 20.